Here is a 236-residue protein sequence, read N- to C-terminus: tRNA (guanine-N(7)-)-methyltransferase (236 aa).

Positions 1-17 (MSERKSDPDRDDSERAF) are enriched in basic and acidic residues. The interval 1-23 (MSERKSDPDRDDSERAFFGRRKG) is disordered. Residues Glu-67, Glu-92, Asp-119, and Asp-141 each contribute to the S-adenosyl-L-methionine site. Asp-141 is an active-site residue. Substrate contacts are provided by Lys-145 and Asp-177.

It belongs to the class I-like SAM-binding methyltransferase superfamily. TrmB family.

The catalysed reaction is guanosine(46) in tRNA + S-adenosyl-L-methionine = N(7)-methylguanosine(46) in tRNA + S-adenosyl-L-homocysteine. It functions in the pathway tRNA modification; N(7)-methylguanine-tRNA biosynthesis. In terms of biological role, catalyzes the formation of N(7)-methylguanine at position 46 (m7G46) in tRNA. This Bradyrhizobium diazoefficiens (strain JCM 10833 / BCRC 13528 / IAM 13628 / NBRC 14792 / USDA 110) protein is tRNA (guanine-N(7)-)-methyltransferase.